Reading from the N-terminus, the 277-residue chain is MDKTLVSAIEDAFARYSTLTVEEIEDSIRPTVNRVIDGLETGAFRVAEPDNHGGWKVNEWLKKAVLLYFRVHDTTIVDAQPAPFWDKVESRFSGYDAVKFRAAGVRVVPGAIARRGSYFGKDVVLMPSFTNIGAYVGEGTMIDTWATVGSCAQLGAHCHLSGGAAIGGVLEPLQASPAIIEDHCFIGARSEVVEGVIVGHHSVIGMGVFISQSTRIYNRATGEISYGYVPPYSVVVSGQLPAKDGTHSLYCAVIVKQVDEKTRAKTSINELLRGLAD.

2 residues coordinate substrate: Arg106 and Asp143.

This sequence belongs to the transferase hexapeptide repeat family. As to quaternary structure, homotrimer.

It is found in the cytoplasm. The catalysed reaction is (S)-2,3,4,5-tetrahydrodipicolinate + succinyl-CoA + H2O = (S)-2-succinylamino-6-oxoheptanedioate + CoA. Its pathway is amino-acid biosynthesis; L-lysine biosynthesis via DAP pathway; LL-2,6-diaminopimelate from (S)-tetrahydrodipicolinate (succinylase route): step 1/3. This Xylella fastidiosa (strain Temecula1 / ATCC 700964) protein is 2,3,4,5-tetrahydropyridine-2,6-dicarboxylate N-succinyltransferase.